We begin with the raw amino-acid sequence, 601 residues long: DNA ligase (601 aa).

D258 provides a ligand contact to ATP. Catalysis depends on K260, which acts as the N6-AMP-lysine intermediate. Positions 265, 280, 310, 350, 427, and 433 each coordinate ATP.

Belongs to the ATP-dependent DNA ligase family. The cofactor is Mg(2+). Ca(2+) is required as a cofactor. Mn(2+) serves as cofactor.

The catalysed reaction is ATP + (deoxyribonucleotide)n-3'-hydroxyl + 5'-phospho-(deoxyribonucleotide)m = (deoxyribonucleotide)n+m + AMP + diphosphate.. Its function is as follows. DNA ligase that seals nicks in double-stranded DNA during DNA replication, DNA recombination and DNA repair. Also has low activity with dATP. Inactive with NAD(+), CTP, GTP, UTP, dCTP, dGTP or dTTP. This is DNA ligase from Saccharolobus shibatae (strain ATCC 51178 / DSM 5389 / JCM 8931 / NBRC 15437 / B12) (Sulfolobus shibatae).